Reading from the N-terminus, the 91-residue chain is uncharacterized protein (91 aa).

Positions 71–91 (NRENNSRSSVKQIINQETEEE) are disordered. Residues 76-91 (SRSSVKQIINQETEEE) show a composition bias toward polar residues.

This is an uncharacterized protein from Bacillus subtilis (strain 168).